A 155-amino-acid polypeptide reads, in one-letter code: Class I hydrophobin C (155 aa).

An N-terminal signal peptide occupies residues 1–22; that stretch reads MLVTMRLSRSIAVFTLVTYATG. Disulfide bonds link Cys-52–Cys-129, Cys-60–Cys-123, Cys-61–Cys-101, and Cys-130–Cys-148.

Belongs to the fungal hydrophobin family. In terms of assembly, self-assembles to form functional amyloid fibrils called rodlets. Self-assembly into fibrillar rodlets occurs spontaneously at hydrophobic:hydrophilic interfaces and the rodlets further associate laterally to form amphipathic monolayers.

Its subcellular location is the secreted. The protein resides in the spore wall. Its function is as follows. Aerial growth, conidiation, and dispersal of filamentous fungi in the environment rely upon a capability of their secreting small amphipathic proteins called hydrophobins (HPBs) with low sequence identity. Class I can self-assemble into an outermost layer of rodlet bundles on aerial cell surfaces, conferring cellular hydrophobicity that supports fungal growth, development and dispersal; whereas Class II form highly ordered films at water-air interfaces through intermolecular interactions but contribute nothing to the rodlet structure. RodC is a class I hydrophobin that, unlike rodA, is not required for rodlet formation. The chain is Class I hydrophobin C from Aspergillus fumigatus (strain ATCC MYA-4609 / CBS 101355 / FGSC A1100 / Af293) (Neosartorya fumigata).